A 454-amino-acid polypeptide reads, in one-letter code: Bifunctional protein GlmU (454 aa).

The tract at residues 1-225 (MNIVILAAGM…LWETLGVNSK (225 aa)) is pyrophosphorylase. UDP-N-acetyl-alpha-D-glucosamine is bound by residues 6–9 (LAAG), Lys20, Gln71, 76–77 (GT), 98–100 (YGD), Gly135, Glu150, Asn165, and Asn223. Residue Asp100 participates in Mg(2+) binding. Position 223 (Asn223) interacts with Mg(2+). The tract at residues 226 to 246 (VQLAEIERIHQRNIAQRLLEA) is linker. The tract at residues 247–454 (GVTLLDPARI…WQRPVKQPKK (208 aa)) is N-acetyltransferase. The UDP-N-acetyl-alpha-D-glucosamine site is built by Arg329 and Lys347. Residue His359 is the Proton acceptor of the active site. 2 residues coordinate UDP-N-acetyl-alpha-D-glucosamine: Tyr362 and Asn373. Acetyl-CoA-binding positions include Ala376, 382-383 (NY), Ser401, Ala419, and Arg436.

It in the N-terminal section; belongs to the N-acetylglucosamine-1-phosphate uridyltransferase family. In the C-terminal section; belongs to the transferase hexapeptide repeat family. Homotrimer. The cofactor is Mg(2+).

The protein localises to the cytoplasm. The catalysed reaction is alpha-D-glucosamine 1-phosphate + acetyl-CoA = N-acetyl-alpha-D-glucosamine 1-phosphate + CoA + H(+). It catalyses the reaction N-acetyl-alpha-D-glucosamine 1-phosphate + UTP + H(+) = UDP-N-acetyl-alpha-D-glucosamine + diphosphate. The protein operates within nucleotide-sugar biosynthesis; UDP-N-acetyl-alpha-D-glucosamine biosynthesis; N-acetyl-alpha-D-glucosamine 1-phosphate from alpha-D-glucosamine 6-phosphate (route II): step 2/2. It functions in the pathway nucleotide-sugar biosynthesis; UDP-N-acetyl-alpha-D-glucosamine biosynthesis; UDP-N-acetyl-alpha-D-glucosamine from N-acetyl-alpha-D-glucosamine 1-phosphate: step 1/1. It participates in bacterial outer membrane biogenesis; LPS lipid A biosynthesis. Functionally, catalyzes the last two sequential reactions in the de novo biosynthetic pathway for UDP-N-acetylglucosamine (UDP-GlcNAc). The C-terminal domain catalyzes the transfer of acetyl group from acetyl coenzyme A to glucosamine-1-phosphate (GlcN-1-P) to produce N-acetylglucosamine-1-phosphate (GlcNAc-1-P), which is converted into UDP-GlcNAc by the transfer of uridine 5-monophosphate (from uridine 5-triphosphate), a reaction catalyzed by the N-terminal domain. The chain is Bifunctional protein GlmU from Cupriavidus metallidurans (strain ATCC 43123 / DSM 2839 / NBRC 102507 / CH34) (Ralstonia metallidurans).